Here is a 42-residue protein sequence, read N- to C-terminus: Photosystem I reaction center subunit IX (42 aa).

The helical transmembrane segment at 7–27 threads the bilayer; that stretch reads YLSVAPVLSTLWFVALAGLLI.

Belongs to the PsaJ family.

It is found in the plastid. Its subcellular location is the chloroplast thylakoid membrane. In terms of biological role, may help in the organization of the PsaE and PsaF subunits. The protein is Photosystem I reaction center subunit IX of Atropa belladonna (Belladonna).